A 546-amino-acid polypeptide reads, in one-letter code: Chaperonin GroEL (546 aa).

ATP contacts are provided by residues 29–32 (TLGP), K50, 86–90 (DGTTT), G414, 477–479 (NAL), and D493.

This sequence belongs to the chaperonin (HSP60) family. Forms a cylinder of 14 subunits composed of two heptameric rings stacked back-to-back. Interacts with the co-chaperonin GroES.

It is found in the cytoplasm. It carries out the reaction ATP + H2O + a folded polypeptide = ADP + phosphate + an unfolded polypeptide.. Functionally, together with its co-chaperonin GroES, plays an essential role in assisting protein folding. The GroEL-GroES system forms a nano-cage that allows encapsulation of the non-native substrate proteins and provides a physical environment optimized to promote and accelerate protein folding. This chain is Chaperonin GroEL, found in Leptospira interrogans serogroup Icterohaemorrhagiae serovar Lai (strain 56601).